Here is a 261-residue protein sequence, read N- to C-terminus: 5-oxoprolinase subunit A (261 aa).

Belongs to the LamB/PxpA family. In terms of assembly, forms a complex composed of PxpA, PxpB and PxpC.

The enzyme catalyses 5-oxo-L-proline + ATP + 2 H2O = L-glutamate + ADP + phosphate + H(+). Catalyzes the cleavage of 5-oxoproline to form L-glutamate coupled to the hydrolysis of ATP to ADP and inorganic phosphate. The polypeptide is 5-oxoprolinase subunit A (Coprothermobacter proteolyticus (strain ATCC 35245 / DSM 5265 / OCM 4 / BT)).